An 82-amino-acid chain; its full sequence is MDKQRIFEVLITNICEVLPELDGHRFEPEDQLVELGADSVDRAEIITMVLEDLSLKIPRIELSGVKNIGELAEVLYDKVQSA.

The 76-residue stretch at 4-79 (QRIFEVLITN…ELAEVLYDKV (76 aa)) folds into the Carrier domain. Position 39 is an O-(pantetheine 4'-phosphoryl)serine (Ser-39).

In terms of processing, 4'-phosphopantetheine is transferred from CoA to a specific serine of apo-ACP by sfp.

Its subcellular location is the cytoplasm. It functions in the pathway antibiotic biosynthesis; bacillaene biosynthesis. In terms of biological role, involved in some intermediate steps for the synthesis of the antibiotic polyketide bacillaene which is involved in secondary metabolism. The sequence is that of Polyketide biosynthesis acyl-carrier-protein AcpK (acpK) from Bacillus subtilis (strain 168).